The sequence spans 338 residues: tRNA(Ile)-lysidine synthase (338 aa).

Position 23–28 (23–28 (SGGLDS)) interacts with ATP.

Belongs to the tRNA(Ile)-lysidine synthase family.

It localises to the cytoplasm. It carries out the reaction cytidine(34) in tRNA(Ile2) + L-lysine + ATP = lysidine(34) in tRNA(Ile2) + AMP + diphosphate + H(+). Ligates lysine onto the cytidine present at position 34 of the AUA codon-specific tRNA(Ile) that contains the anticodon CAU, in an ATP-dependent manner. Cytidine is converted to lysidine, thus changing the amino acid specificity of the tRNA from methionine to isoleucine. The sequence is that of tRNA(Ile)-lysidine synthase from Helicobacter pylori (strain J99 / ATCC 700824) (Campylobacter pylori J99).